The primary structure comprises 225 residues: UPF0758 protein XAC3915 (225 aa).

The region spanning 102–224 (ALSDPPSVGR…PVSFAERGWL (123 aa)) is the MPN domain. Histidine 173, histidine 175, and aspartate 186 together coordinate Zn(2+). The JAMM motif signature appears at 173–186 (HNHPSGNPEPSEAD).

This sequence belongs to the UPF0758 family.

This is UPF0758 protein XAC3915 from Xanthomonas axonopodis pv. citri (strain 306).